We begin with the raw amino-acid sequence, 709 residues long: MTPIVKQFKYGQHTVTLETGAIARQATAAVMASMDDTTVFVTVVAKKEVNEGQDFFPLTVDYQERTYAAGRIPGGFFKREGRPSEGETLIARLIDRPVRPLFPEGFFNEIQVIATVVSVNPQISPDLVAMIGASAALSLSGVPFNGPIGAARVGFIDNQFVLNPTTSEQRLSRLDLVVAGTDKAVLMVESEADILTEEQMLAAVVFGHEQQQVVIENIKEFVKEAGKPRWDWVAPEPNTDLINKVKALAEARLGDAYRITEKQARYEQIDAIKADVIAQLTAEDETISSGKIVDIITALESQIVRSRIIAGEPRIDGRTVDTVRALDICTGVLPRTHGSALFTRGETQALAVATLGTERDAQIIDELTGEKSDRFLFHYNFPPYSVGETGRIGSPKRREIGHGRLAKRGVLAVMPTAEEFPYVVRVVSEITESNGSSSMASVCGASLALMDAGVPIKAAVAGIAMGLVKEEEKFVVLSDILGDEDHLGDMDFKVAGTREGVTALQMDIKIEGITPEIMRIALNQAKGARMHILGVMEQAIPAPRSEISDFAPRIHTMKIDPKKIKDVIGKGGATIRALTEETGTSIDIDDDGTVKIAATDNNAAKRVMERIEEIVAEVEVNAIYKGKVTRVVDFGAFVSILGGKEGLVHISQITDARVERVADYLSVGQDVQVKVVEIERQGRIRLTMKDLNGDATAREVVEEIQELAE.

Residues aspartate 485 and aspartate 491 each coordinate Mg(2+). The 60-residue stretch at 552-611 (PRIHTMKIDPKKIKDVIGKGGATIRALTEETGTSIDIDDDGTVKIAATDNNAAKRVMERI) folds into the KH domain. The S1 motif domain maps to 621–689 (NAIYKGKVTR…RQGRIRLTMK (69 aa)).

It belongs to the polyribonucleotide nucleotidyltransferase family. Component of the RNA degradosome, which is a multiprotein complex involved in RNA processing and mRNA degradation. The cofactor is Mg(2+).

The protein localises to the cytoplasm. The enzyme catalyses RNA(n+1) + phosphate = RNA(n) + a ribonucleoside 5'-diphosphate. In terms of biological role, involved in mRNA degradation. Catalyzes the phosphorolysis of single-stranded polyribonucleotides processively in the 3'- to 5'-direction. The sequence is that of Polyribonucleotide nucleotidyltransferase from Glaesserella parasuis serovar 5 (strain SH0165) (Haemophilus parasuis).